The chain runs to 202 residues: Ribonuclease HII (202 aa).

In terms of domain architecture, RNase H type-2 spans 1-195 (MIVAGVDEVG…PELKGGSPAG (195 aa)). Residues Asp-7, Glu-8, and Asp-103 each contribute to the a divalent metal cation site.

The protein belongs to the RNase HII family. The cofactor is Mn(2+). Mg(2+) serves as cofactor.

The protein resides in the cytoplasm. The enzyme catalyses Endonucleolytic cleavage to 5'-phosphomonoester.. Functionally, endonuclease that specifically degrades the RNA of RNA-DNA hybrids. In Synechococcus sp. (strain RCC307), this protein is Ribonuclease HII.